The primary structure comprises 336 residues: USG-1 protein homolog (336 aa).

Belongs to the aspartate-semialdehyde dehydrogenase family.

This Pseudomonas aeruginosa (strain ATCC 15692 / DSM 22644 / CIP 104116 / JCM 14847 / LMG 12228 / 1C / PRS 101 / PAO1) protein is USG-1 protein homolog (usg).